The primary structure comprises 557 residues: Formate--tetrahydrofolate ligase 2 (557 aa).

66–73 lines the ATP pocket; the sequence is TPAGEGKT.

It belongs to the formate--tetrahydrofolate ligase family.

It catalyses the reaction (6S)-5,6,7,8-tetrahydrofolate + formate + ATP = (6R)-10-formyltetrahydrofolate + ADP + phosphate. It participates in one-carbon metabolism; tetrahydrofolate interconversion. This chain is Formate--tetrahydrofolate ligase 2, found in Streptococcus pyogenes serotype M18 (strain MGAS8232).